Reading from the N-terminus, the 440-residue chain is Chromosome partition protein MukF (440 aa).

Residues 208–236 (LSETSGTLRELQDTLEAAGDKLQANLLRI) form a leucine-zipper region.

This sequence belongs to the MukF family. In terms of assembly, interacts, and probably forms a ternary complex, with MukE and MukB via its C-terminal region. The complex formation is stimulated by calcium or magnesium. It is required for an interaction between MukE and MukB.

Its subcellular location is the cytoplasm. It is found in the nucleoid. Its function is as follows. Involved in chromosome condensation, segregation and cell cycle progression. May participate in facilitating chromosome segregation by condensation DNA from both sides of a centrally located replisome during cell division. Not required for mini-F plasmid partitioning. Probably acts via its interaction with MukB and MukE. Overexpression results in anucleate cells. It has a calcium binding activity. This chain is Chromosome partition protein MukF, found in Salmonella typhi.